Reading from the N-terminus, the 565-residue chain is Adenine deaminase 1 (565 aa).

This sequence belongs to the metallo-dependent hydrolases superfamily. Adenine deaminase family. The cofactor is Mn(2+).

The catalysed reaction is adenine + H2O + H(+) = hypoxanthine + NH4(+). The chain is Adenine deaminase 1 from Rhizobium etli (strain ATCC 51251 / DSM 11541 / JCM 21823 / NBRC 15573 / CFN 42).